The following is a 241-amino-acid chain: Tubulin-like protein alpha-4B (241 aa).

Residues Met-1–Asp-10 show a composition bias toward basic and acidic residues. Residues Met-1–Gly-20 form a disordered region. Residue Asp-10 participates in GTP binding. Asp-10 is a Mg(2+) binding site. Positions Pro-11–Gly-20 are enriched in polar residues. The GTP site is built by Ser-79, Gly-83, Thr-84, Thr-118, Asn-145, and Asn-167. Residue Glu-193 is part of the active site.

It belongs to the tubulin family. It depends on Mg(2+) as a cofactor. Post-translationally, some glutamate residues at the C-terminus are polyglutamylated, resulting in polyglutamate chains on the gamma-carboxyl group. Polyglutamylation plays a key role in microtubule severing by spastin (SPAST). SPAST preferentially recognizes and acts on microtubules decorated with short polyglutamate tails: severing activity by SPAST increases as the number of glutamates per tubulin rises from one to eight, but decreases beyond this glutamylation threshold. Glutamylation is also involved in cilia motility. Some glutamate residues at the C-terminus are monoglycylated but not polyglycylated due to the absence of functional TTLL10 in human. Monoglycylation is mainly limited to tubulin incorporated into cilia and flagella axonemes, which is required for their stability and maintenance. Flagella glycylation controls sperm motility. Both polyglutamylation and monoglycylation can coexist on the same protein on adjacent residues, and lowering glycylation levels increases polyglutamylation, and reciprocally.

Its subcellular location is the cytoplasm. It localises to the cytoskeleton. The catalysed reaction is GTP + H2O = GDP + phosphate + H(+). Its function is as follows. Tubulin is the major constituent of microtubules, a cylinder consisting of laterally associated linear protofilaments composed ofalpha- and beta-tubulin heterodimers. This is Tubulin-like protein alpha-4B (TUBA4B) from Homo sapiens (Human).